A 576-amino-acid polypeptide reads, in one-letter code: Peptidoglycan D,D-transpeptidase FtsI (576 aa).

A helical membrane pass occupies residues 22-42 (ITILLSLIIITIILVLSRITF). Ser308 functions as the Acyl-ester intermediate in the catalytic mechanism.

The protein belongs to the transpeptidase family. FtsI subfamily.

Its subcellular location is the cell inner membrane. It catalyses the reaction Preferential cleavage: (Ac)2-L-Lys-D-Ala-|-D-Ala. Also transpeptidation of peptidyl-alanyl moieties that are N-acyl substituents of D-alanine.. The protein operates within cell wall biogenesis; peptidoglycan biosynthesis. In terms of biological role, catalyzes cross-linking of the peptidoglycan cell wall at the division septum. In Buchnera aphidicola subsp. Baizongia pistaciae (strain Bp), this protein is Peptidoglycan D,D-transpeptidase FtsI.